A 275-amino-acid polypeptide reads, in one-letter code: Diaminopimelate epimerase (275 aa).

Substrate is bound by residues asparagine 13, glutamine 46, and asparagine 66. Cysteine 75 serves as the catalytic Proton donor. Residues 76–77 (GN), asparagine 159, asparagine 192, and 210–211 (ER) each bind substrate. Residue cysteine 219 is the Proton acceptor of the active site. Position 220 to 221 (220 to 221 (GS)) interacts with substrate.

The protein belongs to the diaminopimelate epimerase family. As to quaternary structure, homodimer.

It is found in the cytoplasm. It catalyses the reaction (2S,6S)-2,6-diaminopimelate = meso-2,6-diaminopimelate. It functions in the pathway amino-acid biosynthesis; L-lysine biosynthesis via DAP pathway; DL-2,6-diaminopimelate from LL-2,6-diaminopimelate: step 1/1. In terms of biological role, catalyzes the stereoinversion of LL-2,6-diaminopimelate (L,L-DAP) to meso-diaminopimelate (meso-DAP), a precursor of L-lysine and an essential component of the bacterial peptidoglycan. The sequence is that of Diaminopimelate epimerase from Idiomarina loihiensis (strain ATCC BAA-735 / DSM 15497 / L2-TR).